The primary structure comprises 489 residues: MFS-type transporter MFS19 (489 aa).

Residues 1-12 are compositionally biased toward basic and acidic residues; sequence MAHSTAGDRDPE. Residues 1 to 42 form a disordered region; sequence MAHSTAGDRDPEVGSEQHSSIAQLHTESMSDPWGDSNSPENP. Residues 16-41 show a composition bias toward polar residues; the sequence is EQHSSIAQLHTESMSDPWGDSNSPEN. Residues 52 to 72 traverse the membrane as a helical segment; it reads FHVAIVSIFTLTANLAATMFA. N-linked (GlcNAc...) asparagine glycans are attached at residues Asn83 and Asn86. The next 11 membrane-spanning stretches (helical) occupy residues 91–111, 127–147, 149–169, 180–200, 208–228, 282–302, 321–341, 361–381, 388–408, 425–445, and 454–474; these read AMTV…LAPL, VYIA…FLVF, FLCG…VADI, ALFA…GGYV, WTFR…MFFM, PIVL…FLLF, GLAY…FSIL, LILM…YGWS, WIVP…VVIP, ALAA…LVAA, and GWGN…PWLF.

Belongs to the major facilitator superfamily.

It is found in the cell membrane. Functionally, MFS-type efflux pump involved in the modulation susceptibility to various compounds including cumyl hydroperoxide, potassium superoxide, many singlet oxygen-generating compounds (eosin Y, rose Bengal, hematoporphyrin, methylene blue, and cercosporin), and the cell wall biosynthesis inhibitor Congo red. Involved in oxidative stress tolerance, colonization, and lesion formation. In Alternaria alternata (Alternaria rot fungus), this protein is MFS-type transporter MFS19.